Reading from the N-terminus, the 1407-residue chain is DNA-directed RNA polymerase subunit beta' (1407 aa).

Zn(2+) contacts are provided by Cys-70, Cys-72, Cys-85, and Cys-88. Mg(2+) contacts are provided by Asp-458, Asp-460, and Asp-462. Positions 814, 888, 895, and 898 each coordinate Zn(2+).

The protein belongs to the RNA polymerase beta' chain family. The RNAP catalytic core consists of 2 alpha, 1 beta, 1 beta' and 1 omega subunit. When a sigma factor is associated with the core the holoenzyme is formed, which can initiate transcription. It depends on Mg(2+) as a cofactor. Zn(2+) serves as cofactor.

The enzyme catalyses RNA(n) + a ribonucleoside 5'-triphosphate = RNA(n+1) + diphosphate. In terms of biological role, DNA-dependent RNA polymerase catalyzes the transcription of DNA into RNA using the four ribonucleoside triphosphates as substrates. The protein is DNA-directed RNA polymerase subunit beta' of Leptothrix cholodnii (strain ATCC 51168 / LMG 8142 / SP-6) (Leptothrix discophora (strain SP-6)).